We begin with the raw amino-acid sequence, 186 residues long: ATP synthase subunit delta (186 aa).

This sequence belongs to the ATPase delta chain family. F-type ATPases have 2 components, F(1) - the catalytic core - and F(0) - the membrane proton channel. F(1) has five subunits: alpha(3), beta(3), gamma(1), delta(1), epsilon(1). CF(0) has four main subunits: a(1), b(1), b'(1) and c(10-14). The alpha and beta chains form an alternating ring which encloses part of the gamma chain. F(1) is attached to F(0) by a central stalk formed by the gamma and epsilon chains, while a peripheral stalk is formed by the delta, b and b' chains.

It localises to the cell inner membrane. In terms of biological role, f(1)F(0) ATP synthase produces ATP from ADP in the presence of a proton or sodium gradient. F-type ATPases consist of two structural domains, F(1) containing the extramembraneous catalytic core and F(0) containing the membrane proton channel, linked together by a central stalk and a peripheral stalk. During catalysis, ATP synthesis in the catalytic domain of F(1) is coupled via a rotary mechanism of the central stalk subunits to proton translocation. Its function is as follows. This protein is part of the stalk that links CF(0) to CF(1). It either transmits conformational changes from CF(0) to CF(1) or is implicated in proton conduction. The protein is ATP synthase subunit delta of Rhodospirillum centenum (strain ATCC 51521 / SW).